The primary structure comprises 309 residues: F-box/LRR-repeat protein At3g48880 (309 aa).

Residues L10–V57 form the F-box domain. LRR repeat units lie at residues V77–F107, N108–A133, S159–G184, and C208–H233.

The protein is F-box/LRR-repeat protein At3g48880 of Arabidopsis thaliana (Mouse-ear cress).